The chain runs to 208 residues: Imidazoleglycerol-phosphate dehydratase (208 aa).

Belongs to the imidazoleglycerol-phosphate dehydratase family.

The protein resides in the cytoplasm. It catalyses the reaction D-erythro-1-(imidazol-4-yl)glycerol 3-phosphate = 3-(imidazol-4-yl)-2-oxopropyl phosphate + H2O. Its pathway is amino-acid biosynthesis; L-histidine biosynthesis; L-histidine from 5-phospho-alpha-D-ribose 1-diphosphate: step 6/9. The polypeptide is Imidazoleglycerol-phosphate dehydratase (Pseudarthrobacter chlorophenolicus (strain ATCC 700700 / DSM 12829 / CIP 107037 / JCM 12360 / KCTC 9906 / NCIMB 13794 / A6) (Arthrobacter chlorophenolicus)).